The following is a 77-amino-acid chain: Putative defensin-like protein 30 (77 aa).

A signal peptide spans 1–26 (MASSSKCAFLVFLCMIVLLAPSEVHA). 3 disulfide bridges follow: C43/C63, C49/C72, and C53/C74.

It belongs to the DEFL family.

It is found in the secreted. The chain is Putative defensin-like protein 30 from Arabidopsis thaliana (Mouse-ear cress).